The following is a 446-amino-acid chain: MSTFIGQLFGFAVIVYLVWRFIVPVVGRLMSARQDTVRQQLADAAAAADRLAEASQAHTKALEDAKSEAHRVVEEARTDAERIAEQLEAQADVEAERIKMQGARQVDLIRAQLTRQLRLELGHESVRQARELVRNHVADQAQQSATVDRFLDQLDAMAPATADVDYPLLAKMRSASRRALTSLVDWFGTMAQDLDHQGLTTLAGELVSVARLLDREAVVTRYLTVPAEDATPRIRLIERLVSGKVGAPTLEVLRTAVSKRWSANSDLIDAIEHVSRQALLELAERAGQVDEVEDQLFRFSRILDVQPRLAILLGDCAVPAEGRVRLLRKVLERADSTVNPVVVALLSHTVELLRGQAVEEAVLFLAEVAVARRGEIVAQVGAAAELSDAQRTRLTEVLSRIYGHPVTVQLHIDAALLGGLSIAVGDEVIDGTLSSRLAAAEARLPD.

The tract at residues 1 to 168 is ATP synthase subunit b; the sequence is MSTFIGQLFG…PATADVDYPL (168 aa). A helical membrane pass occupies residues 4–24; sequence FIGQLFGFAVIVYLVWRFIVP. The interval 169 to 446 is ATP synthase subunit delta; the sequence is LAKMRSASRR…LAAAEARLPD (278 aa).

In the N-terminal section; belongs to the ATPase B chain family. The protein in the C-terminal section; belongs to the ATPase delta chain family. As to quaternary structure, F-type ATPases have 2 components, F(1) - the catalytic core - and F(0) - the membrane proton channel. F(1) has five subunits: alpha(3), beta(3), gamma(1), delta(1), epsilon(1). F(0) has three main subunits: a(1), b(2) and c(10-14). The alpha and beta chains form an alternating ring which encloses part of the gamma chain. F(1) is attached to F(0) by a central stalk formed by the gamma and epsilon chains, while a peripheral stalk is formed by the delta and b chains.

It localises to the cell membrane. Functionally, f(1)F(0) ATP synthase produces ATP from ADP in the presence of a proton or sodium gradient. F-type ATPases consist of two structural domains, F(1) containing the extramembraneous catalytic core and F(0) containing the membrane proton channel, linked together by a central stalk and a peripheral stalk. During catalysis, ATP synthesis in the catalytic domain of F(1) is coupled via a rotary mechanism of the central stalk subunits to proton translocation. This fusion protein includes a component of the F(0) channel (subunit b) and of the F(1) subunit (subunit delta). Two copies of subunit b and one of delta together form the peripheral 'stator' stalk which links F(1) to F(0). The sequence is that of ATP synthase subunit b-delta (atpFH) from Mycobacterium tuberculosis (strain CDC 1551 / Oshkosh).